Here is a 347-residue protein sequence, read N- to C-terminus: Nicotinate-nucleotide--dimethylbenzimidazole phosphoribosyltransferase (347 aa).

The Proton acceptor role is filled by Glu-316.

Belongs to the CobT family.

It carries out the reaction 5,6-dimethylbenzimidazole + nicotinate beta-D-ribonucleotide = alpha-ribazole 5'-phosphate + nicotinate + H(+). It participates in nucleoside biosynthesis; alpha-ribazole biosynthesis; alpha-ribazole from 5,6-dimethylbenzimidazole: step 1/2. Catalyzes the synthesis of alpha-ribazole-5'-phosphate from nicotinate mononucleotide (NAMN) and 5,6-dimethylbenzimidazole (DMB). The sequence is that of Nicotinate-nucleotide--dimethylbenzimidazole phosphoribosyltransferase from Vibrio parahaemolyticus serotype O3:K6 (strain RIMD 2210633).